We begin with the raw amino-acid sequence, 369 residues long: Peridinin-chlorophyll a-binding protein 2, chloroplastic (369 aa).

The transit peptide at 1–56 (MVRSGKKAVVLATVAFCATSVVQKTCGFVPSPLRQRAAAAGAAASVATMFAPAAFA) directs the protein to the chloroplast. A run of 2 repeats spans residues 57–219 (DEIG…VPSG) and 220–369 (DTIG…AAQR).

As to quaternary structure, homotrimer.

It localises to the plastid. The protein resides in the chloroplast. Functionally, water-soluble antenna for capture of solar energy in the blue-green range. Peridinin is an asymmetric carotenoid. The sequence is that of Peridinin-chlorophyll a-binding protein 2, chloroplastic from Amphidinium carterae (Dinoflagellate).